The primary structure comprises 258 residues: Acetylglutamate kinase (258 aa).

Residues Gly-44–Gly-45, Arg-66, and Asn-158 contribute to the substrate site. ATP contacts are provided by residues Asp-181–Leu-186 and Ile-209–Thr-211.

Belongs to the acetylglutamate kinase family. ArgB subfamily. In terms of assembly, homodimer.

It is found in the cytoplasm. It carries out the reaction N-acetyl-L-glutamate + ATP = N-acetyl-L-glutamyl 5-phosphate + ADP. It functions in the pathway amino-acid biosynthesis; L-arginine biosynthesis; N(2)-acetyl-L-ornithine from L-glutamate: step 2/4. Catalyzes the ATP-dependent phosphorylation of N-acetyl-L-glutamate. The polypeptide is Acetylglutamate kinase (Shigella flexneri).